We begin with the raw amino-acid sequence, 155 residues long: 6,7-dimethyl-8-ribityllumazine synthase (155 aa).

5-amino-6-(D-ribitylamino)uracil-binding positions include phenylalanine 24, 58–60 (AFE), and 82–84 (VII). 87–88 (ST) is a binding site for (2S)-2-hydroxy-3-oxobutyl phosphate. Histidine 90 acts as the Proton donor in catalysis. Position 115 (phenylalanine 115) interacts with 5-amino-6-(D-ribitylamino)uracil. Residue arginine 129 participates in (2S)-2-hydroxy-3-oxobutyl phosphate binding.

It belongs to the DMRL synthase family.

It catalyses the reaction (2S)-2-hydroxy-3-oxobutyl phosphate + 5-amino-6-(D-ribitylamino)uracil = 6,7-dimethyl-8-(1-D-ribityl)lumazine + phosphate + 2 H2O + H(+). Its pathway is cofactor biosynthesis; riboflavin biosynthesis; riboflavin from 2-hydroxy-3-oxobutyl phosphate and 5-amino-6-(D-ribitylamino)uracil: step 1/2. Functionally, catalyzes the formation of 6,7-dimethyl-8-ribityllumazine by condensation of 5-amino-6-(D-ribitylamino)uracil with 3,4-dihydroxy-2-butanone 4-phosphate. This is the penultimate step in the biosynthesis of riboflavin. The chain is 6,7-dimethyl-8-ribityllumazine synthase from Chlorobaculum tepidum (strain ATCC 49652 / DSM 12025 / NBRC 103806 / TLS) (Chlorobium tepidum).